Here is a 381-residue protein sequence, read N- to C-terminus: Beta-lactamase CMY-4 (381 aa).

Residues 1–20 form the signal peptide; it reads MMKKSLCCALLLTASFSTFA. S84 acts as the Acyl-ester intermediate in catalysis. The a beta-lactam site is built by S84, Q140, Y170, and N172.

It belongs to the class-C beta-lactamase family.

It catalyses the reaction a beta-lactam + H2O = a substituted beta-amino acid. Functionally, class C beta-lactamase which confers resistance to penicillins and cephalosporins. This chain is Beta-lactamase CMY-4, found in Klebsiella pneumoniae.